Reading from the N-terminus, the 200-residue chain is Nitrile hydratase subunit alpha (200 aa).

Fe(3+) contacts are provided by Cys-105, Cys-108, Ser-109, and Cys-110. Residue Cys-108 is modified to Cysteine sulfinic acid (-SO2H). Position 110 is a cysteine sulfenic acid (-SOH) (Cys-110).

This sequence belongs to the nitrile hydratase subunit alpha family. In terms of assembly, heterodimer of an alpha and a beta chain. Fe(3+) is required as a cofactor. Post-translationally, oxidation on Cys-108 is essential for the activity. Oxidation on Cys-110 stabilizes the Fe-NO ligand coordinated in the inactive form.

The enzyme catalyses an aliphatic primary amide = an aliphatic nitrile + H2O. Its activity is regulated as follows. Inactivated by oxidation of Cys-110 to a sulfenic acid. NHase catalyzes the hydration of various nitrile compounds to the corresponding amides. Industrial production of acrylamide is now being developed using some of the enzymes of this class. The chain is Nitrile hydratase subunit alpha (nthA) from Pseudomonas chlororaphis (Pseudomonas aureofaciens).